Consider the following 425-residue polypeptide: Histidine--tRNA ligase (425 aa).

It belongs to the class-II aminoacyl-tRNA synthetase family. In terms of assembly, homodimer.

It localises to the cytoplasm. It catalyses the reaction tRNA(His) + L-histidine + ATP = L-histidyl-tRNA(His) + AMP + diphosphate + H(+). The sequence is that of Histidine--tRNA ligase from Pelotomaculum thermopropionicum (strain DSM 13744 / JCM 10971 / SI).